The chain runs to 781 residues: Probable serine/threonine-protein kinase C70.05c (781 aa).

Disordered regions lie at residues 1 to 315 (MPSD…PLVS) and 368 to 417 (YSGK…TNIS). Residues 21–31 (ESPSSRSIGSG) are compositionally biased toward low complexity. The span at 43–63 (FKNSFLSRKNSSQIKSPSDYK) shows a compositional bias: polar residues. The segment covering 64–73 (SSAHEQRVNH) has biased composition (basic and acidic residues). A compositionally biased stretch (polar residues) spans 74–92 (TTDSMAHVPGNNSPLQTPQ). The residue at position 94 (S94) is a Phosphoserine. Residues 112 to 121 (SRHHKPHHSG) are compositionally biased toward basic residues. 3 stretches are compositionally biased toward polar residues: residues 136-146 (SNANSPTSESP), 161-195 (KNTS…PNSR), and 206-228 (NSAS…SLSR). S253 bears the Phosphoserine mark. A compositionally biased stretch (low complexity) spans 272 to 304 (PLTASPTPSSPTGTPNSMSKSPSLSSLASTGAS). Over residues 379–406 (NVGSSANTAPNSPTSANSSEGNQGNGPT) the composition is skewed to polar residues. Positions 432–742 (AKRVVPRLSA…AQEALNLPFV (311 aa)) constitute a Protein kinase domain. ATP contacts are provided by residues 452–460 (MGSGATAVI) and K480. D584 functions as the Proton acceptor in the catalytic mechanism.

The protein belongs to the protein kinase superfamily. Ser/Thr protein kinase family.

Its subcellular location is the cytoplasm. It carries out the reaction L-seryl-[protein] + ATP = O-phospho-L-seryl-[protein] + ADP + H(+). It catalyses the reaction L-threonyl-[protein] + ATP = O-phospho-L-threonyl-[protein] + ADP + H(+). The polypeptide is Probable serine/threonine-protein kinase C70.05c (Schizosaccharomyces pombe (strain 972 / ATCC 24843) (Fission yeast)).